Consider the following 420-residue polypeptide: Adenylosuccinate synthetase (420 aa).

GTP is bound by residues G11–K17 and G39–T41. The active-site Proton acceptor is D12. 2 residues coordinate Mg(2+): D12 and G39. Residues D12 to K15, N37 to H40, T129, R143, N218, T233, and R297 contribute to the IMP site. The active-site Proton donor is H40. V293 to R299 serves as a coordination point for substrate. Residues R299, K325–D327, and G407–G409 each bind GTP.

Belongs to the adenylosuccinate synthetase family. In terms of assembly, homodimer. Mg(2+) is required as a cofactor.

Its subcellular location is the cytoplasm. The catalysed reaction is IMP + L-aspartate + GTP = N(6)-(1,2-dicarboxyethyl)-AMP + GDP + phosphate + 2 H(+). The protein operates within purine metabolism; AMP biosynthesis via de novo pathway; AMP from IMP: step 1/2. Functionally, plays an important role in the de novo pathway and in the salvage pathway of purine nucleotide biosynthesis. Catalyzes the first committed step in the biosynthesis of AMP from IMP. The chain is Adenylosuccinate synthetase from Uncinocarpus reesii (strain UAMH 1704).